The primary structure comprises 57 residues: Large ribosomal subunit protein bL32c (57 aa).

Positions M1–K21 are disordered.

It belongs to the bacterial ribosomal protein bL32 family.

The protein resides in the plastid. The protein localises to the chloroplast. This chain is Large ribosomal subunit protein bL32c, found in Stigeoclonium helveticum (Green alga).